Here is a 462-residue protein sequence, read N- to C-terminus: Argininosuccinate lyase (462 aa).

This sequence belongs to the lyase 1 family. Argininosuccinate lyase subfamily.

It localises to the cytoplasm. It catalyses the reaction 2-(N(omega)-L-arginino)succinate = fumarate + L-arginine. The protein operates within amino-acid biosynthesis; L-arginine biosynthesis; L-arginine from L-ornithine and carbamoyl phosphate: step 3/3. This is Argininosuccinate lyase from Leuconostoc citreum (strain KM20).